The sequence spans 426 residues: Enolase (426 aa).

Position 163 (Q163) interacts with (2R)-2-phosphoglycerate. E205 (proton donor) is an active-site residue. D242, E286, and D313 together coordinate Mg(2+). Positions 338, 367, 368, and 389 each coordinate (2R)-2-phosphoglycerate. K338 serves as the catalytic Proton acceptor.

It belongs to the enolase family. Requires Mg(2+) as cofactor.

It localises to the cytoplasm. The protein localises to the secreted. The protein resides in the cell surface. The catalysed reaction is (2R)-2-phosphoglycerate = phosphoenolpyruvate + H2O. Its pathway is carbohydrate degradation; glycolysis; pyruvate from D-glyceraldehyde 3-phosphate: step 4/5. Catalyzes the reversible conversion of 2-phosphoglycerate (2-PG) into phosphoenolpyruvate (PEP). It is essential for the degradation of carbohydrates via glycolysis. In Helicobacter acinonychis (strain Sheeba), this protein is Enolase.